The sequence spans 153 residues: NAD(P)H-quinone oxidoreductase subunit N (153 aa).

The protein belongs to the complex I NdhN subunit family. As to quaternary structure, NDH-1 can be composed of about 15 different subunits; different subcomplexes with different compositions have been identified which probably have different functions.

The protein localises to the cellular thylakoid membrane. The enzyme catalyses a plastoquinone + NADH + (n+1) H(+)(in) = a plastoquinol + NAD(+) + n H(+)(out). It catalyses the reaction a plastoquinone + NADPH + (n+1) H(+)(in) = a plastoquinol + NADP(+) + n H(+)(out). In terms of biological role, NDH-1 shuttles electrons from an unknown electron donor, via FMN and iron-sulfur (Fe-S) centers, to quinones in the respiratory and/or the photosynthetic chain. The immediate electron acceptor for the enzyme in this species is believed to be plastoquinone. Couples the redox reaction to proton translocation, and thus conserves the redox energy in a proton gradient. Cyanobacterial NDH-1 also plays a role in inorganic carbon-concentration. The chain is NAD(P)H-quinone oxidoreductase subunit N from Synechococcus sp. (strain CC9605).